Reading from the N-terminus, the 949-residue chain is Piwi-like protein 2 (949 aa).

The segment at 1-125 is disordered; sequence MDPTRPPFRG…SLSTRVQQAS (125 aa). Residues 115 to 125 are compositionally biased toward polar residues; sequence PSLSTRVQQAS. One can recognise a PAZ domain in the interval 366–478; sequence SVLDIMNILY…LLPELAFMTG (113 aa). The Piwi domain occupies 644-935; the sequence is LLVCLISGTR…LAFLSGQFLH (292 aa). Catalysis depends on residues Asp-721, Glu-759, Asp-791, and His-924.

The protein belongs to the argonaute family. Piwi subfamily. In terms of assembly, component of the PET complex. It depends on Mg(2+) as a cofactor. In terms of processing, methylated on arginine residues; required for the interaction with Tudor domain-containing protein and subsequent localization to the meiotic nuage, also named P granule. Expressed in oocytes, testis and liver (at protein level).

It is found in the cytoplasm. The protein resides in the nucleus. In terms of biological role, endoribonuclease that plays a central role during spermatogenesis by repressing transposable elements and preventing their mobilization, which is essential for the germline integrity. Plays an essential role in meiotic differentiation of spermatocytes, germ cell differentiation and in self-renewal of spermatogonial stem cells. Acts via the piRNA metabolic process, which mediates the repression of transposable elements during meiosis by forming complexes composed of piRNAs and Piwi proteins and govern the methylation and subsequent repression of transposons. During piRNA biosynthesis, plays a key role in the piRNA amplification loop, also named ping-pong amplification cycle, by acting as a 'slicer-competent' piRNA endoribonuclease that cleaves primary piRNAs, which are then loaded onto 'slicer-incompetent' piwil4. Piwil2 slicing produces a pre-miRNA intermediate, which is then processed in mature piRNAs, and as well as a 16 nucleotide by-product that is degraded. Required for piwil4/miwi2 nuclear localization and association with secondary piRNAs antisense. Represses circadian rhythms by promoting the stability and activity of core clock components BMAL1 and CLOCK. The chain is Piwi-like protein 2 (piwil2) from Xenopus tropicalis (Western clawed frog).